Consider the following 320-residue polypeptide: Coproporphyrin III ferrochelatase (320 aa).

Residues H194 and E273 each contribute to the Fe(2+) site.

The protein belongs to the ferrochelatase family.

Its subcellular location is the cytoplasm. The enzyme catalyses Fe-coproporphyrin III + 2 H(+) = coproporphyrin III + Fe(2+). The protein operates within porphyrin-containing compound metabolism; protoheme biosynthesis. In terms of biological role, involved in coproporphyrin-dependent heme b biosynthesis. Catalyzes the insertion of ferrous iron into coproporphyrin III to form Fe-coproporphyrin III. The chain is Coproporphyrin III ferrochelatase from Symbiobacterium thermophilum (strain DSM 24528 / JCM 14929 / IAM 14863 / T).